The chain runs to 281 residues: Pantothenate synthetase (281 aa).

Residue 30–37 (MGYLHEGH) coordinates ATP. The active-site Proton donor is the His37. (R)-pantoate is bound at residue Gln61. Residue Gln61 participates in beta-alanine binding. ATP is bound at residue 147-150 (GQKD). Residue Gln153 coordinates (R)-pantoate. Residues Val176 and 184 to 187 (MSSR) each bind ATP.

It belongs to the pantothenate synthetase family. As to quaternary structure, homodimer.

It localises to the cytoplasm. The catalysed reaction is (R)-pantoate + beta-alanine + ATP = (R)-pantothenate + AMP + diphosphate + H(+). It participates in cofactor biosynthesis; (R)-pantothenate biosynthesis; (R)-pantothenate from (R)-pantoate and beta-alanine: step 1/1. Functionally, catalyzes the condensation of pantoate with beta-alanine in an ATP-dependent reaction via a pantoyl-adenylate intermediate. In Heliobacterium modesticaldum (strain ATCC 51547 / Ice1), this protein is Pantothenate synthetase.